Consider the following 276-residue polypeptide: Mitochondrial outer membrane protein porin 1 (276 aa).

This sequence belongs to the eukaryotic mitochondrial porin (TC 1.B.8.1) family. As to expression, expressed in shoot meristems, root meristematic zone, lateral roots, leaves, stigma and anthers.

Its subcellular location is the mitochondrion outer membrane. Its function is as follows. Forms a channel through the mitochondrial outer membrane that allows diffusion of small hydrophilic molecules. The channel adopts an open conformation at low or zero membrane potential and a closed conformation at potentials above 30-40 mV. The open state has a weak anion selectivity whereas the closed state is cation-selective. Involved in plant development at reproductive stage, is important for pollen development and may regulate hydrogen peroxide generation during disease resistance. This chain is Mitochondrial outer membrane protein porin 1 (VDAC1), found in Arabidopsis thaliana (Mouse-ear cress).